We begin with the raw amino-acid sequence, 384 residues long: Putative pectate lyase 2 (384 aa).

Positions 1–23 are cleaved as a signal peptide; the sequence is MASLFLTIISLLFAAFSSSVVEA. 3 residues coordinate Ca(2+): Asp-182, Asp-206, and Asp-210. Arg-262 is an active-site residue.

It belongs to the polysaccharide lyase 1 family. The cofactor is Ca(2+).

It catalyses the reaction Eliminative cleavage of (1-&gt;4)-alpha-D-galacturonan to give oligosaccharides with 4-deoxy-alpha-D-galact-4-enuronosyl groups at their non-reducing ends.. It functions in the pathway glycan metabolism; pectin degradation; 2-dehydro-3-deoxy-D-gluconate from pectin: step 2/5. This is Putative pectate lyase 2 from Arabidopsis thaliana (Mouse-ear cress).